Reading from the N-terminus, the 220-residue chain is Uracil-DNA glycosylase (220 aa).

D65 (proton acceptor) is an active-site residue.

It belongs to the uracil-DNA glycosylase (UDG) superfamily. UNG family.

The protein resides in the cytoplasm. It catalyses the reaction Hydrolyzes single-stranded DNA or mismatched double-stranded DNA and polynucleotides, releasing free uracil.. Its function is as follows. Excises uracil residues from the DNA which can arise as a result of misincorporation of dUMP residues by DNA polymerase or due to deamination of cytosine. The chain is Uracil-DNA glycosylase from Bacteroides thetaiotaomicron (strain ATCC 29148 / DSM 2079 / JCM 5827 / CCUG 10774 / NCTC 10582 / VPI-5482 / E50).